The following is a 59-amino-acid chain: Cecropin-B2 (59 aa).

A signal peptide spans 1–23 (MNFNKLFLIVILAALLLLGQTEA). Residue Leu57 is modified to Leucine amide.

The protein belongs to the cecropin family.

The protein localises to the secreted. In terms of biological role, cecropins have lytic and antibacterial activity against several Gram-positive and Gram-negative bacteria. The chain is Cecropin-B2 (CECB2) from Culex pipiens pipiens (Northern house mosquito).